Consider the following 388-residue polypeptide: Pre-mRNA-splicing factor cwf2 (388 aa).

The disordered stretch occupies residues 43 to 63; that stretch reads VKRKKQPARKQIETRPEYEME. The C3H1-type zinc finger occupies 111 to 138; that stretch reads NPGSFFCLYFARGMCSEGSKCEYLHRLP. In terms of domain architecture, RRM spans 174–248; sequence YTLYVGGITP…ECLNVRWATT (75 aa). The tract at residues 331–352 is disordered; the sequence is PNKSQSEEGSNDDHKSVTTTES.

Belongs to the RRM CWC2 family. In terms of assembly, belongs to the 40S cdc5-associated complex (or cwf complex), a spliceosome sub-complex reminiscent of a late-stage spliceosome composed of the U2, U5 and U6 snRNAs and at least brr2, cdc5, cwf2/prp3, cwf3/syf1, cwf4/syf3, cwf5/ecm2, spp42/cwf6, cwf7/spf27, cwf8, cwf9, cwf10, cwf11, cwf12, prp45/cwf13, cwf14, cwf15, cwf16, cwf17, cwf18, cwf19, cwf20, cwf21, cwf22, cwf23, cwf24, cwf25, cwf26, cyp7/cwf27, cwf28, cwf29/ist3, lea1, msl1, prp5/cwf1, prp10, prp12/sap130, prp17, prp22, sap61, sap62, sap114, sap145, slu7, smb1, smd1, smd3, smf1, smg1 and syf2.

It localises to the nucleus. In terms of biological role, involved in the first step of pre-mRNA splicing. Required for cell growth and cell cycle control. Plays a role in the levels of the U1, U4, U5 and U6 snRNAs and the maintenance of the U4/U6 snRNA complex. May provide the link between the 'nineteen complex' NTC spliceosome protein complex and the spliceosome through the U6 snRNA. Associates predominantly with U6 snRNAs in assembled active spliceosomes. Binds directly to the internal stem-loop (ISL) domain of the U6 snRNA and to the pre-mRNA intron near the 5' splice site during the activation and catalytic phases of the spliceosome cycle. Involved in pre-mRNA splicing. This chain is Pre-mRNA-splicing factor cwf2 (cwf2), found in Schizosaccharomyces pombe (strain 972 / ATCC 24843) (Fission yeast).